Reading from the N-terminus, the 67-residue chain is Protein AaeX (67 aa).

2 helical membrane passes run 3-23 (LFPVFVVFGLSFPPIFFELIL) and 43-63 (FVWHPALFNTALYCCLFYLIS).

The protein belongs to the AaeX family.

It localises to the cell membrane. The protein is Protein AaeX of Enterobacter sp. (strain 638).